A 529-amino-acid chain; its full sequence is Bifunctional purine biosynthesis protein PurH (529 aa).

In terms of domain architecture, MGS-like spans Met-1–Val-148.

This sequence belongs to the PurH family.

It catalyses the reaction (6R)-10-formyltetrahydrofolate + 5-amino-1-(5-phospho-beta-D-ribosyl)imidazole-4-carboxamide = 5-formamido-1-(5-phospho-D-ribosyl)imidazole-4-carboxamide + (6S)-5,6,7,8-tetrahydrofolate. The catalysed reaction is IMP + H2O = 5-formamido-1-(5-phospho-D-ribosyl)imidazole-4-carboxamide. It participates in purine metabolism; IMP biosynthesis via de novo pathway; 5-formamido-1-(5-phospho-D-ribosyl)imidazole-4-carboxamide from 5-amino-1-(5-phospho-D-ribosyl)imidazole-4-carboxamide (10-formyl THF route): step 1/1. The protein operates within purine metabolism; IMP biosynthesis via de novo pathway; IMP from 5-formamido-1-(5-phospho-D-ribosyl)imidazole-4-carboxamide: step 1/1. This Pectobacterium atrosepticum (strain SCRI 1043 / ATCC BAA-672) (Erwinia carotovora subsp. atroseptica) protein is Bifunctional purine biosynthesis protein PurH.